The chain runs to 101 residues: Small ribosomal subunit protein uS14 (101 aa).

The protein belongs to the universal ribosomal protein uS14 family. In terms of assembly, part of the 30S ribosomal subunit. Contacts proteins S3 and S10.

Binds 16S rRNA, required for the assembly of 30S particles and may also be responsible for determining the conformation of the 16S rRNA at the A site. This is Small ribosomal subunit protein uS14 from Rhizobium meliloti (strain 1021) (Ensifer meliloti).